Here is a 939-residue protein sequence, read N- to C-terminus: Isoleucine--tRNA ligase (939 aa).

The 'HIGH' region signature appears at 57-67 (PYANGHIHLGH). Glu-561 is a binding site for L-isoleucyl-5'-AMP. The 'KMSKS' region signature appears at 602-606 (KMSKS). Residue Lys-605 coordinates ATP. Residues Cys-903, Cys-906, Cys-923, and Cys-926 each contribute to the Zn(2+) site.

This sequence belongs to the class-I aminoacyl-tRNA synthetase family. IleS type 1 subfamily. Monomer. The cofactor is Zn(2+).

It localises to the cytoplasm. The enzyme catalyses tRNA(Ile) + L-isoleucine + ATP = L-isoleucyl-tRNA(Ile) + AMP + diphosphate. Catalyzes the attachment of isoleucine to tRNA(Ile). As IleRS can inadvertently accommodate and process structurally similar amino acids such as valine, to avoid such errors it has two additional distinct tRNA(Ile)-dependent editing activities. One activity is designated as 'pretransfer' editing and involves the hydrolysis of activated Val-AMP. The other activity is designated 'posttransfer' editing and involves deacylation of mischarged Val-tRNA(Ile). The polypeptide is Isoleucine--tRNA ligase (Desulfotalea psychrophila (strain LSv54 / DSM 12343)).